We begin with the raw amino-acid sequence, 117 residues long: Large ribosomal subunit protein uL18 (117 aa).

This sequence belongs to the universal ribosomal protein uL18 family. Part of the 50S ribosomal subunit; part of the 5S rRNA/L5/L18/L25 subcomplex. Contacts the 5S and 23S rRNAs.

This is one of the proteins that bind and probably mediate the attachment of the 5S RNA into the large ribosomal subunit, where it forms part of the central protuberance. This Hydrogenovibrio crunogenus (strain DSM 25203 / XCL-2) (Thiomicrospira crunogena) protein is Large ribosomal subunit protein uL18.